The following is a 185-amino-acid chain: Ribulose bisphosphate carboxylase small subunit, chloroplastic 2 (185 aa).

The N-terminal 45 residues, 1–45, are a transit peptide targeting the chloroplast; sequence MAAVIAKSSVSAAVARPARSSVRPMAALKPAVKAAPVAAPAQANQ. An N-methylmethionine modification is found at M46.

It belongs to the RuBisCO small chain family. Heterohexadecamer of 8 large and 8 small subunits.

It is found in the plastid. Its subcellular location is the chloroplast. The protein resides in the chloroplast stroma. RuBisCO catalyzes two reactions: the carboxylation of D-ribulose 1,5-bisphosphate, the primary event in carbon dioxide fixation, as well as the oxidative fragmentation of the pentose substrate. Both reactions occur simultaneously and in competition at the same active site. Although the small subunit is not catalytic it is essential for maximal activity. The protein is Ribulose bisphosphate carboxylase small subunit, chloroplastic 2 of Chlamydomonas reinhardtii (Chlamydomonas smithii).